Reading from the N-terminus, the 398-residue chain is S-adenosylmethionine synthase (398 aa).

Residue 136–141 coordinates ATP; sequence GTGSSD.

It belongs to the AdoMet synthase 2 family. Requires Mg(2+) as cofactor.

It catalyses the reaction L-methionine + ATP + H2O = S-adenosyl-L-methionine + phosphate + diphosphate. It functions in the pathway amino-acid biosynthesis; S-adenosyl-L-methionine biosynthesis; S-adenosyl-L-methionine from L-methionine: step 1/1. Catalyzes the formation of S-adenosylmethionine from methionine and ATP. The protein is S-adenosylmethionine synthase of Methanosarcina barkeri (strain Fusaro / DSM 804).